We begin with the raw amino-acid sequence, 145 residues long: MKQQKDASKPAHFFHQVIVIALVLFVSKIIESFMPIPMPASVIGLVLLFVLLCTGAVKLGEVEKVGTTLTNNIGLLFVPAGISVVNSLGVISQAPFLIIGLIIVSTILLLICTGYVTQIIMKVTSRSKGDKVTKKVKIEEAQAHD.

The next 4 membrane-spanning stretches (helical) occupy residues 10 to 30 (PAHF…SKII), 33 to 53 (FMPI…VLLC), 72 to 92 (NIGL…GVIS), and 96 to 116 (FLII…TGYV).

This sequence belongs to the CidA/LrgA family. LrgA subfamily.

The protein localises to the cell membrane. Its function is as follows. Inhibits the expression or activity of extracellular murein hydrolases by interacting, possibly with LrgB, with the holin-like proteins CidA and/or CidB. The LrgAB and CidAB proteins may affect the proton motive force of the membrane. May be involved in programmed cell death (PCD), possibly triggering PCD in response to antibiotics and environmental stresses. In Staphylococcus aureus (strain JH1), this protein is Antiholin-like protein LrgA.